Consider the following 465-residue polypeptide: Trigger factor (465 aa).

Residues 164 to 245 form the PPIase FKBP-type domain; that stretch reads GDFVSIDLSA…VQSVKERELP (82 aa). The disordered stretch occupies residues 430–465; it reads GNTVDTAEMFGEPAAEPEQADAAQAGDAEKAAADSE. The span at 440-455 shows a compositional bias: low complexity; it reads GEPAAEPEQADAAQAG. Over residues 456–465 the composition is skewed to basic and acidic residues; sequence DAEKAAADSE.

This sequence belongs to the FKBP-type PPIase family. Tig subfamily.

The protein localises to the cytoplasm. The catalysed reaction is [protein]-peptidylproline (omega=180) = [protein]-peptidylproline (omega=0). Involved in protein export. Acts as a chaperone by maintaining the newly synthesized protein in an open conformation. Functions as a peptidyl-prolyl cis-trans isomerase. The protein is Trigger factor of Nocardia farcinica (strain IFM 10152).